A 676-amino-acid chain; its full sequence is Potassium-transporting ATPase ATP-binding subunit (676 aa).

A run of 4 helical transmembrane segments spans residues 24–44 (NPVM…CFYP), 45–65 (MGIP…TLLF), 212–232 (IFLI…VPFT), and 246–266 (SLVI…GALI). Asp302 acts as the 4-aspartylphosphate intermediate in catalysis. ATP contacts are provided by residues Asp339, Glu343, 372-379 (FSAKTRMS), and Lys390. Positions 513 and 517 each coordinate Mg(2+). A run of 3 helical transmembrane segments spans residues 573 to 593 (FSIA…FYSI), 611 to 631 (AILS…PLAL), and 656 to 676 (GIIA…LIIL).

It belongs to the cation transport ATPase (P-type) (TC 3.A.3) family. Type IA subfamily. In terms of assembly, the system is composed of three essential subunits: KdpA, KdpB and KdpC.

It localises to the cell membrane. It catalyses the reaction K(+)(out) + ATP + H2O = K(+)(in) + ADP + phosphate + H(+). Functionally, part of the high-affinity ATP-driven potassium transport (or Kdp) system, which catalyzes the hydrolysis of ATP coupled with the electrogenic transport of potassium into the cytoplasm. This subunit is responsible for energy coupling to the transport system and for the release of the potassium ions to the cytoplasm. The sequence is that of Potassium-transporting ATPase ATP-binding subunit from Enterococcus faecalis (strain ATCC 700802 / V583).